The sequence spans 347 residues: Protein RecA (347 aa).

65 to 72 (GPESSGKT) serves as a coordination point for ATP. Positions 327–336 (KFEPTELSRE) are enriched in basic and acidic residues. A disordered region spans residues 327 to 347 (KFEPTELSREEGDEDTLEDAM). Residues 337–347 (EGDEDTLEDAM) are compositionally biased toward acidic residues.

The protein belongs to the RecA family.

The protein resides in the cytoplasm. Its function is as follows. Can catalyze the hydrolysis of ATP in the presence of single-stranded DNA, the ATP-dependent uptake of single-stranded DNA by duplex DNA, and the ATP-dependent hybridization of homologous single-stranded DNAs. It interacts with LexA causing its activation and leading to its autocatalytic cleavage. The protein is Protein RecA of Xylella fastidiosa (strain M12).